The following is a 161-amino-acid chain: 6,7-dimethyl-8-ribityllumazine synthase (161 aa).

5-amino-6-(D-ribitylamino)uracil contacts are provided by residues tryptophan 26, 58–60, and 81–83; these read SFE and VVI. 86–87 contributes to the (2S)-2-hydroxy-3-oxobutyl phosphate binding site; sequence GT. Histidine 89 acts as the Proton donor in catalysis. Residue phenylalanine 114 coordinates 5-amino-6-(D-ribitylamino)uracil. Arginine 128 lines the (2S)-2-hydroxy-3-oxobutyl phosphate pocket.

Belongs to the DMRL synthase family.

It catalyses the reaction (2S)-2-hydroxy-3-oxobutyl phosphate + 5-amino-6-(D-ribitylamino)uracil = 6,7-dimethyl-8-(1-D-ribityl)lumazine + phosphate + 2 H2O + H(+). Its pathway is cofactor biosynthesis; riboflavin biosynthesis; riboflavin from 2-hydroxy-3-oxobutyl phosphate and 5-amino-6-(D-ribitylamino)uracil: step 1/2. Catalyzes the formation of 6,7-dimethyl-8-ribityllumazine by condensation of 5-amino-6-(D-ribitylamino)uracil with 3,4-dihydroxy-2-butanone 4-phosphate. This is the penultimate step in the biosynthesis of riboflavin. This Streptomyces avermitilis (strain ATCC 31267 / DSM 46492 / JCM 5070 / NBRC 14893 / NCIMB 12804 / NRRL 8165 / MA-4680) protein is 6,7-dimethyl-8-ribityllumazine synthase.